Reading from the N-terminus, the 166-residue chain is Ribosome maturation factor RimP (166 aa).

It belongs to the RimP family.

Its subcellular location is the cytoplasm. Required for maturation of 30S ribosomal subunits. The sequence is that of Ribosome maturation factor RimP from Psychrobacter cryohalolentis (strain ATCC BAA-1226 / DSM 17306 / VKM B-2378 / K5).